A 374-amino-acid chain; its full sequence is Glutamate 5-kinase (374 aa).

Residue Lys8 participates in ATP binding. 3 residues coordinate substrate: Ser49, Asp136, and Asn148. Residues 168-169 and 211-217 contribute to the ATP site; these read TD and TGGMQTK. Residues 276–354 form the PUA domain; it reads QGILTLDDGA…TQIRQILGYG (79 aa).

This sequence belongs to the glutamate 5-kinase family.

The protein localises to the cytoplasm. It carries out the reaction L-glutamate + ATP = L-glutamyl 5-phosphate + ADP. Its pathway is amino-acid biosynthesis; L-proline biosynthesis; L-glutamate 5-semialdehyde from L-glutamate: step 1/2. Functionally, catalyzes the transfer of a phosphate group to glutamate to form L-glutamate 5-phosphate. The sequence is that of Glutamate 5-kinase from Picosynechococcus sp. (strain ATCC 27264 / PCC 7002 / PR-6) (Agmenellum quadruplicatum).